Here is a 1074-residue protein sequence, read N- to C-terminus: Probable arabinosyltransferase C (1074 aa).

The next 10 membrane-spanning stretches (helical) occupy residues 15 to 37 (ARLV…PLLP), 214 to 236 (LLKL…ALHV), 251 to 273 (SRWW…WHFV), 415 to 437 (IIIG…ALLV), 452 to 474 (RFGY…FLIF), 516 to 538 (SVAR…AMTL), 573 to 595 (THQF…VAVT), 608 to 630 (FGAA…WYVS), 645 to 667 (FGFT…WFHF), and 684 to 706 (LLVA…SLTL).

The protein belongs to the emb family.

The protein resides in the cell membrane. Arabinosyl transferase responsible for the polymerization of arabinose into the arabinan of arabinogalactan. In Mycolicibacterium smegmatis (Mycobacterium smegmatis), this protein is Probable arabinosyltransferase C (embC).